The primary structure comprises 334 residues: Methionine adenosyltransferase 2 subunit beta (334 aa).

Residues 37 to 40, 60 to 62, 71 to 72, Cys93, Arg97, Tyr159, and Leu185 contribute to the NADP(+) site; these read TGLL, FRR, and NL. A Phosphothreonine modification is found at Thr309. The tract at residues 319-334 is required for interaction with MAT2A; that stretch reads LWPFLIDKRWRQTVFH.

This sequence belongs to the dTDP-4-dehydrorhamnose reductase family. MAT2B subfamily. Heterotrimer; composed of a catalytic MAT2A homodimer that binds one regulatory MAT2B chain. Heterohexamer; composed of a central, catalytic MAT2A homotetramer flanked on either side by a regulatory MAT2B chain. NADP binding increases the affinity for MAT2A.

It functions in the pathway amino-acid biosynthesis; S-adenosyl-L-methionine biosynthesis; S-adenosyl-L-methionine from L-methionine: step 1/1. Functionally, regulatory subunit of S-adenosylmethionine synthetase 2, an enzyme that catalyzes the formation of S-adenosylmethionine from methionine and ATP. Regulates MAT2A catalytic activity by changing its kinetic properties, increasing its affinity for L-methionine. Can bind NADP (in vitro). The sequence is that of Methionine adenosyltransferase 2 subunit beta (MAT2B) from Pongo abelii (Sumatran orangutan).